A 63-amino-acid polypeptide reads, in one-letter code: Acrosin inhibitor 1 (63 aa).

The Kazal-like domain occupies 8–63 (FGFPPDCKVYTEACTREYNPICDSAAKTYSNECTFCNEKMNNDADIHFNHFGECEY). Disulfide bonds link Cys14–Cys43, Cys21–Cys40, and Cys29–Cys61.

As to expression, seminal plasma.

Its subcellular location is the secreted. Strong inhibitor of acrosin. This chain is Acrosin inhibitor 1, found in Bos taurus (Bovine).